A 240-amino-acid chain; its full sequence is tRNA (guanine-N(1)-)-methyltransferase (240 aa).

S-adenosyl-L-methionine-binding positions include G110 and 129–134 (LGDFVL).

This sequence belongs to the RNA methyltransferase TrmD family. In terms of assembly, homodimer.

It is found in the cytoplasm. The catalysed reaction is guanosine(37) in tRNA + S-adenosyl-L-methionine = N(1)-methylguanosine(37) in tRNA + S-adenosyl-L-homocysteine + H(+). Its function is as follows. Specifically methylates guanosine-37 in various tRNAs. The protein is tRNA (guanine-N(1)-)-methyltransferase of Clostridium botulinum (strain ATCC 19397 / Type A).